Consider the following 271-residue polypeptide: tRNA pseudouridine synthase A (271 aa).

Asp-56 acts as the Nucleophile in catalysis. Tyr-120 lines the substrate pocket.

The protein belongs to the tRNA pseudouridine synthase TruA family. As to quaternary structure, homodimer.

The enzyme catalyses uridine(38/39/40) in tRNA = pseudouridine(38/39/40) in tRNA. In terms of biological role, formation of pseudouridine at positions 38, 39 and 40 in the anticodon stem and loop of transfer RNAs. In Janthinobacterium sp. (strain Marseille) (Minibacterium massiliensis), this protein is tRNA pseudouridine synthase A.